The chain runs to 1176 residues: Histidine kinase 2 (1176 aa).

The Cytoplasmic segment spans residues 1-29 (MSITCELLNLTSKKAKKSSSSDKKWLKKP). The helical transmembrane segment at 30–50 (LFFLILCGSLVIVLVMFLRLG) threads the bilayer. Over 51–174 (RSQKEETDSC…LEQGLSSYLR (124 aa)) the chain is Extracellular. A helical membrane pass occupies residues 175–195 (NAWWCLILGVLVCHKIYVSHS). Topologically, residues 196-232 (KARGERKEKVHLQEALAPKKQQQRAQTSSRGAGRWRK) are cytoplasmic. A helical transmembrane segment spans residues 233-253 (NILLLGILGGVSFSVWWFWDT). The Extracellular segment spans residues 254 to 536 (NEEIIMKRRE…CRFKHKLPIP (283 aa)). Positions 302-526 (IPSAIDQRTF…GDPSRNHEMH (225 aa)) constitute a CHASE domain. A helical transmembrane segment spans residues 537–557 (WTAITPSILVLVITFLVGYIL). At 558-1176 (YEAINRIATV…TAVARFFEPC (619 aa)) the chain is on the cytoplasmic side. A Histidine kinase domain is found at 594–867 (TVSHEIRTPM…TFSFTGVFGK (274 aa)). The residue at position 597 (His597) is a Phosphohistidine; by autocatalysis. 2 consecutive Response regulatory domains span residues 891-1013 (RALV…QETL) and 1036-1173 (QILV…ARFF). 2 positions are modified to 4-aspartylphosphate: Asp942 and Asp1086.

In terms of assembly, self-interacts. Interacts with AHK3, AHP1, AHP2, AHP3, AHP5, ATAF2, AT2S3, BETAA-AD, CYP20-2, DRP1A, HIR1, HIR2, PI4KB1, PI4KG5 and At4g12060. Post-translationally, autophosphorylated predominantly on His residues. Activation probably requires a transfer of a phosphate group between a His in the transmitter domain and an Asp of the receiver domain. Expressed in roots, leaves and flowers, mostly in the vascular tissues. Present in seedlings.

The protein localises to the endoplasmic reticulum membrane. The enzyme catalyses ATP + protein L-histidine = ADP + protein N-phospho-L-histidine.. Activated by cytokinins to initiate phosphorelay signaling. Cytokinins (CK) receptor related to bacterial two-component regulators. Functions as a histidine kinase and transmits the stress signal to a downstream MAPK cascade. This protein undergoes an ATP-dependent autophosphorylation at a conserved histidine residue in the kinase core, and a phosphoryl group is then transferred to a conserved aspartate residue in the receiver domain. In the presence of cytokinin, feeds phosphate to phosphorelay-integrating histidine phosphotransfer protein (HPt) and activates subsequent cascade. Involved in meristems establishment in seedlings. Redundant negative regulator of drought and salt stress responses and abscisic acid (ABA) signaling. Together with AHK3, plays a negative regulatory role in cold stress signaling via inhibition of ABA response, occurring independently of the cold acclimation pathway. Redundant positive regulator of cytokinin signaling that regulates many developmental processes including seed germination, cell division, seed size, chlorophyll retention during leaf senescence, root repression and shoot promotion. Involved in alkamides (e.g. N-isobutyl decanamide) and N-acylethanolamides (NAE) signaling that control meristematic activity and differentiation processes during plant development. Contributes to vascular bundle formation and secondary growth in a cytokinin-dependent manner, probably by promoting the maintenance of mitotic activity and/or identity of procambial cells. Together with AHK4, required for growth and reproduction promotion stimulated by the endophytic fungus Piriformospora indica in a trans-zeatin-dependent manner. Required by the cytokinin-dependent flower development regulation pathway. The polypeptide is Histidine kinase 2 (AHK2) (Arabidopsis thaliana (Mouse-ear cress)).